The following is a 226-amino-acid chain: NAD(P)H-hydrate epimerase (226 aa).

The region spanning 10–215 (AIELDLDLFE…ALQRKYQLNL (206 aa)) is the YjeF N-terminal domain. Position 58–62 (58–62 (NNGGD)) interacts with (6S)-NADPHX. K(+) contacts are provided by asparagine 59 and aspartate 123. (6S)-NADPHX-binding positions include 127-133 (GFGFKPP) and aspartate 156. K(+) is bound at residue serine 159.

The protein belongs to the NnrE/AIBP family. K(+) serves as cofactor.

It carries out the reaction (6R)-NADHX = (6S)-NADHX. It catalyses the reaction (6R)-NADPHX = (6S)-NADPHX. In terms of biological role, catalyzes the epimerization of the S- and R-forms of NAD(P)HX, a damaged form of NAD(P)H that is a result of enzymatic or heat-dependent hydration. This is a prerequisite for the S-specific NAD(P)H-hydrate dehydratase to allow the repair of both epimers of NAD(P)HX. The protein is NAD(P)H-hydrate epimerase of Drosophila persimilis (Fruit fly).